The primary structure comprises 302 residues: Acetylglutamate kinase (302 aa).

Substrate is bound by residues 67–68 (GG), Arg89, and Asn194.

This sequence belongs to the acetylglutamate kinase family. ArgB subfamily.

Its subcellular location is the cytoplasm. The catalysed reaction is N-acetyl-L-glutamate + ATP = N-acetyl-L-glutamyl 5-phosphate + ADP. It participates in amino-acid biosynthesis; L-arginine biosynthesis; N(2)-acetyl-L-ornithine from L-glutamate: step 2/4. In terms of biological role, catalyzes the ATP-dependent phosphorylation of N-acetyl-L-glutamate. This is Acetylglutamate kinase from Hahella chejuensis (strain KCTC 2396).